The chain runs to 200 residues: MLKVGLTGGIGSGKSSVARRLAAHGALVIDADAIAREVVEPGTPALAEIVAEFGDQVLTPEGRLDRARLGEIVFADETKLARLNAIVHPRVGERTQELMAQAKEGTIVVYDVPLLVENNLADQYDVVIVVDVPVHTQVERVTANRGMPEEQVRARINAQASREQRRAVADIIIDNSGTEEELDARVAEVWEELQRRLHSR.

The region spanning 3–200 (KVGLTGGIGS…EELQRRLHSR (198 aa)) is the DPCK domain. 11-16 (GSGKSS) lines the ATP pocket.

This sequence belongs to the CoaE family.

The protein resides in the cytoplasm. The catalysed reaction is 3'-dephospho-CoA + ATP = ADP + CoA + H(+). It participates in cofactor biosynthesis; coenzyme A biosynthesis; CoA from (R)-pantothenate: step 5/5. Its function is as follows. Catalyzes the phosphorylation of the 3'-hydroxyl group of dephosphocoenzyme A to form coenzyme A. This chain is Dephospho-CoA kinase, found in Thermobifida fusca (strain YX).